Consider the following 130-residue polypeptide: Glycoprotein hormone beta-5 (130 aa).

The signal sequence occupies residues 1 to 24; that stretch reads MKLVYLVLGAVALLLLGGPDSVLS. 5 disulfides stabilise this stretch: cysteine 36–cysteine 84, cysteine 50–cysteine 99, cysteine 60–cysteine 115, cysteine 64–cysteine 117, and cysteine 120–cysteine 127. N-linked (GlcNAc...) asparagine glycosylation is present at asparagine 87.

The protein belongs to the glycoprotein hormones subunit beta family. As to quaternary structure, heterodimer with GPHA2; this heterodimer interacts with thyroid-stimulating hormone receptor (TSHR), and hence stimulates cAMP production. N-glycosylated. Expressed in the anterior lobe of pituitary.

The protein resides in the secreted. Functions as a heterodimeric glycoprotein hormone with GPHA2 able to bind and activate the thyroid-stimulating hormone receptor (TSHR), leading to increased cAMP production. Plays a central role in controlling thyroid cell metabolism. In Mus musculus (Mouse), this protein is Glycoprotein hormone beta-5 (Gphb5).